A 420-amino-acid polypeptide reads, in one-letter code: 4-hydroxy-3-methylbut-2-en-1-yl diphosphate synthase (flavodoxin) (420 aa).

[4Fe-4S] cluster is bound by residues C307, C310, C353, and E360.

The protein belongs to the IspG family. [4Fe-4S] cluster serves as cofactor.

The enzyme catalyses (2E)-4-hydroxy-3-methylbut-2-enyl diphosphate + oxidized [flavodoxin] + H2O + 2 H(+) = 2-C-methyl-D-erythritol 2,4-cyclic diphosphate + reduced [flavodoxin]. It participates in isoprenoid biosynthesis; isopentenyl diphosphate biosynthesis via DXP pathway; isopentenyl diphosphate from 1-deoxy-D-xylulose 5-phosphate: step 5/6. Its function is as follows. Converts 2C-methyl-D-erythritol 2,4-cyclodiphosphate (ME-2,4cPP) into 1-hydroxy-2-methyl-2-(E)-butenyl 4-diphosphate. In Brucella melitensis biotype 2 (strain ATCC 23457), this protein is 4-hydroxy-3-methylbut-2-en-1-yl diphosphate synthase (flavodoxin).